A 210-amino-acid polypeptide reads, in one-letter code: Inner membrane-spanning protein YciB (210 aa).

Transmembrane regions (helical) follow at residues 19–39 (LVLE…GDWL), 53–73 (IFIA…VSWI), 78–98 (LPMM…LTLW), 115–135 (LFGA…GYVF), 148–168 (KLTI…EIVW), and 175–195 (FWVA…TLAQ).

It belongs to the YciB family.

The protein localises to the cell inner membrane. Its function is as follows. Plays a role in cell envelope biogenesis, maintenance of cell envelope integrity and membrane homeostasis. This Sinorhizobium fredii (strain NBRC 101917 / NGR234) protein is Inner membrane-spanning protein YciB.